The following is a 418-amino-acid chain: Gamma-glutamyl phosphate reductase (418 aa).

This sequence belongs to the gamma-glutamyl phosphate reductase family.

Its subcellular location is the cytoplasm. The enzyme catalyses L-glutamate 5-semialdehyde + phosphate + NADP(+) = L-glutamyl 5-phosphate + NADPH + H(+). Its pathway is amino-acid biosynthesis; L-proline biosynthesis; L-glutamate 5-semialdehyde from L-glutamate: step 2/2. Functionally, catalyzes the NADPH-dependent reduction of L-glutamate 5-phosphate into L-glutamate 5-semialdehyde and phosphate. The product spontaneously undergoes cyclization to form 1-pyrroline-5-carboxylate. The sequence is that of Gamma-glutamyl phosphate reductase from Teredinibacter turnerae (strain ATCC 39867 / T7901).